A 440-amino-acid polypeptide reads, in one-letter code: Cobyrinate a,c-diamide synthase (440 aa).

In terms of domain architecture, GATase cobBQ-type spans 247 to 428 (RIAIAYDAAF…MHLYFPSNPR (182 aa)). Cysteine 329 (nucleophile) is an active-site residue.

This sequence belongs to the CobB/CbiA family. The cofactor is Mg(2+).

It catalyses the reaction cob(II)yrinate + 2 L-glutamine + 2 ATP + 2 H2O = cob(II)yrinate a,c diamide + 2 L-glutamate + 2 ADP + 2 phosphate + 2 H(+). Its pathway is cofactor biosynthesis; adenosylcobalamin biosynthesis; cob(II)yrinate a,c-diamide from sirohydrochlorin (anaerobic route): step 10/10. Its function is as follows. Catalyzes the ATP-dependent amidation of the two carboxylate groups at positions a and c of cobyrinate, using either L-glutamine or ammonia as the nitrogen source. In Picrophilus torridus (strain ATCC 700027 / DSM 9790 / JCM 10055 / NBRC 100828 / KAW 2/3), this protein is Cobyrinate a,c-diamide synthase.